The sequence spans 101 residues: Large ribosomal subunit protein uL24 (101 aa).

This sequence belongs to the universal ribosomal protein uL24 family. As to quaternary structure, part of the 50S ribosomal subunit.

In terms of biological role, one of two assembly initiator proteins, it binds directly to the 5'-end of the 23S rRNA, where it nucleates assembly of the 50S subunit. Its function is as follows. One of the proteins that surrounds the polypeptide exit tunnel on the outside of the subunit. In Jannaschia sp. (strain CCS1), this protein is Large ribosomal subunit protein uL24.